A 724-amino-acid polypeptide reads, in one-letter code: N-alpha-acetyltransferase 35, NatC auxiliary subunit (724 aa).

This sequence belongs to the MAK10 family. Component of the N-terminal acetyltransferase C (NatC) complex.

It localises to the cytoplasm. Auxillary component of the N-terminal acetyltransferase C (NatC) complex which catalyzes acetylation of N-terminal methionine residues. N-terminal acetylation protects proteins from ubiquitination and degradation by the N-end rule pathway. Regulates cell proliferation during embryonic development. The chain is N-alpha-acetyltransferase 35, NatC auxiliary subunit (naa35) from Danio rerio (Zebrafish).